Reading from the N-terminus, the 108-residue chain is Pyrimidine/purine nucleoside phosphorylase (108 aa).

The protein belongs to the nucleoside phosphorylase PpnP family.

The catalysed reaction is a purine D-ribonucleoside + phosphate = a purine nucleobase + alpha-D-ribose 1-phosphate. It catalyses the reaction adenosine + phosphate = alpha-D-ribose 1-phosphate + adenine. It carries out the reaction cytidine + phosphate = cytosine + alpha-D-ribose 1-phosphate. The enzyme catalyses guanosine + phosphate = alpha-D-ribose 1-phosphate + guanine. The catalysed reaction is inosine + phosphate = alpha-D-ribose 1-phosphate + hypoxanthine. It catalyses the reaction thymidine + phosphate = 2-deoxy-alpha-D-ribose 1-phosphate + thymine. It carries out the reaction uridine + phosphate = alpha-D-ribose 1-phosphate + uracil. The enzyme catalyses xanthosine + phosphate = alpha-D-ribose 1-phosphate + xanthine. Its function is as follows. Catalyzes the phosphorolysis of diverse nucleosides, yielding D-ribose 1-phosphate and the respective free bases. Can use uridine, adenosine, guanosine, cytidine, thymidine, inosine and xanthosine as substrates. Also catalyzes the reverse reactions. This Polaromonas naphthalenivorans (strain CJ2) protein is Pyrimidine/purine nucleoside phosphorylase.